The sequence spans 233 residues: Small ribosomal subunit protein eS4 (233 aa).

The 63-residue stretch at 37–99 (VPLVVVLRDV…RDEYYRVFPD (63 aa)) folds into the S4 RNA-binding domain.

It belongs to the eukaryotic ribosomal protein eS4 family.

This chain is Small ribosomal subunit protein eS4, found in Halobacterium salinarum (strain ATCC 29341 / DSM 671 / R1).